Consider the following 328-residue polypeptide: MAKHVKVAVTGAAGQIGYALLFRLASGQAFGLDTTVDLHLLEIEPALPALKGVVMELEDCAFPLLRNMVVTSDPRVAFNDVNWALLVGAAPRKAGMERKDLLEKNGSIFAGQGKAINENAASDVRIFVVGNPCNTNCLIAMNNAPDIPKDRFYAMTRLDQNRAIGQLALKAGVDVPSVKNMIIWGNHSSTQYPDFYHATIDGKPATEVIRDKNWLLNDFISVIQQRGAAVIKARGASSAASAANAALDSVWSLINTTPADDNYSVALCAQGQYGVDEGLIFSFPCRTENGVVSVIEEIEHNEFGQQKLKETLDELREERDAVEALGLI.

Residue 11–17 (GAAGQIG) participates in NAD(+) binding. Positions 92 and 98 each coordinate substrate. NAD(+)-binding positions include asparagine 105, glutamine 112, and 129-131 (VGN). The substrate site is built by asparagine 131 and arginine 162. The Proton acceptor role is filled by histidine 187.

Belongs to the LDH/MDH superfamily. MDH type 2 family.

It carries out the reaction (S)-malate + NAD(+) = oxaloacetate + NADH + H(+). Catalyzes the reversible oxidation of malate to oxaloacetate. In Coxiella burnetii (strain RSA 493 / Nine Mile phase I), this protein is Malate dehydrogenase.